Here is an 87-residue protein sequence, read N- to C-terminus: DNA-directed RNA polymerase subunit omega (87 aa).

This sequence belongs to the RNA polymerase subunit omega family. As to quaternary structure, the RNAP catalytic core consists of 2 alpha, 1 beta, 1 beta' and 1 omega subunit. When a sigma factor is associated with the core the holoenzyme is formed, which can initiate transcription.

The catalysed reaction is RNA(n) + a ribonucleoside 5'-triphosphate = RNA(n+1) + diphosphate. Functionally, promotes RNA polymerase assembly. Latches the N- and C-terminal regions of the beta' subunit thereby facilitating its interaction with the beta and alpha subunits. The chain is DNA-directed RNA polymerase subunit omega from Pseudomonas syringae pv. syringae (strain B728a).